A 366-amino-acid polypeptide reads, in one-letter code: tRNA/tmRNA (uracil-C(5))-methyltransferase (366 aa).

The S-adenosyl-L-methionine site is built by Gln190, Tyr218, Asn223, Glu239, and Asp299. The active-site Nucleophile is Cys324. Residue Glu358 is the Proton acceptor of the active site.

Belongs to the class I-like SAM-binding methyltransferase superfamily. RNA M5U methyltransferase family. TrmA subfamily.

It carries out the reaction uridine(54) in tRNA + S-adenosyl-L-methionine = 5-methyluridine(54) in tRNA + S-adenosyl-L-homocysteine + H(+). The enzyme catalyses uridine(341) in tmRNA + S-adenosyl-L-methionine = 5-methyluridine(341) in tmRNA + S-adenosyl-L-homocysteine + H(+). Its function is as follows. Dual-specificity methyltransferase that catalyzes the formation of 5-methyluridine at position 54 (m5U54) in all tRNAs, and that of position 341 (m5U341) in tmRNA (transfer-mRNA). This Salmonella paratyphi B (strain ATCC BAA-1250 / SPB7) protein is tRNA/tmRNA (uracil-C(5))-methyltransferase.